The primary structure comprises 294 residues: MSNWLVDKLIPSIMRSEVKKSSVPEGLWHKCPSCDAVLYRPELEKTLDVCPKCNHHMRIGARARLDIFLDQDGREEIGADLEPVDRLKFRDSKKYKDRLAAAQKQTGEKDALIAMSGTLEGMPIAVCAFEFSFMGGSMGAIVGERFVQAANVALEQRCPLVCFSASGGARMQEALISLMQMAKTSAALARLREEGLPFISVLTDPVYGGVSASLAMLGDVIVAEPKALIGFAGPRVIEQTVREKLPEGFQRSEFLLEHGAIDMIIPRNELRPRLARLLAQLMNRPSPVALPVTA.

A CoA carboxyltransferase N-terminal domain is found at 27-294 (LWHKCPSCDA…PSPVALPVTA (268 aa)). Positions 31, 34, 50, and 53 each coordinate Zn(2+). Residues 31–53 (CPSCDAVLYRPELEKTLDVCPKC) form a C4-type zinc finger.

This sequence belongs to the AccD/PCCB family. As to quaternary structure, acetyl-CoA carboxylase is a heterohexamer composed of biotin carboxyl carrier protein (AccB), biotin carboxylase (AccC) and two subunits each of ACCase subunit alpha (AccA) and ACCase subunit beta (AccD). Zn(2+) serves as cofactor.

The protein localises to the cytoplasm. It carries out the reaction N(6)-carboxybiotinyl-L-lysyl-[protein] + acetyl-CoA = N(6)-biotinyl-L-lysyl-[protein] + malonyl-CoA. The protein operates within lipid metabolism; malonyl-CoA biosynthesis; malonyl-CoA from acetyl-CoA: step 1/1. Component of the acetyl coenzyme A carboxylase (ACC) complex. Biotin carboxylase (BC) catalyzes the carboxylation of biotin on its carrier protein (BCCP) and then the CO(2) group is transferred by the transcarboxylase to acetyl-CoA to form malonyl-CoA. The polypeptide is Acetyl-coenzyme A carboxylase carboxyl transferase subunit beta (Ectopseudomonas mendocina (strain ymp) (Pseudomonas mendocina)).